The following is a 294-amino-acid chain: Homoserine kinase (294 aa).

Arg-83–Ala-93 is an ATP binding site.

The protein belongs to the GHMP kinase family. Homoserine kinase subfamily.

It is found in the cytoplasm. The catalysed reaction is L-homoserine + ATP = O-phospho-L-homoserine + ADP + H(+). The protein operates within amino-acid biosynthesis; L-threonine biosynthesis; L-threonine from L-aspartate: step 4/5. Its function is as follows. Catalyzes the ATP-dependent phosphorylation of L-homoserine to L-homoserine phosphate. This Pyrococcus abyssi (strain GE5 / Orsay) protein is Homoserine kinase.